The chain runs to 273 residues: 4-hydroxy-tetrahydrodipicolinate reductase (273 aa).

Residues glycine 8–methionine 13, glutamate 34, glycine 102–threonine 104, and serine 128–methionine 131 contribute to the NAD(+) site. Histidine 161 (proton donor/acceptor) is an active-site residue. Histidine 162 contacts (S)-2,3,4,5-tetrahydrodipicolinate. The Proton donor role is filled by lysine 165. Residue glycine 171–threonine 172 coordinates (S)-2,3,4,5-tetrahydrodipicolinate.

This sequence belongs to the DapB family.

The protein resides in the cytoplasm. The enzyme catalyses (S)-2,3,4,5-tetrahydrodipicolinate + NAD(+) + H2O = (2S,4S)-4-hydroxy-2,3,4,5-tetrahydrodipicolinate + NADH + H(+). The catalysed reaction is (S)-2,3,4,5-tetrahydrodipicolinate + NADP(+) + H2O = (2S,4S)-4-hydroxy-2,3,4,5-tetrahydrodipicolinate + NADPH + H(+). It functions in the pathway amino-acid biosynthesis; L-lysine biosynthesis via DAP pathway; (S)-tetrahydrodipicolinate from L-aspartate: step 4/4. Functionally, catalyzes the conversion of 4-hydroxy-tetrahydrodipicolinate (HTPA) to tetrahydrodipicolinate. The sequence is that of 4-hydroxy-tetrahydrodipicolinate reductase from Methanosphaera stadtmanae (strain ATCC 43021 / DSM 3091 / JCM 11832 / MCB-3).